The chain runs to 314 residues: MATELDKIFLILAIAEFIISMLGNVFIGLVNCSEGIKNQKVFSADFILTCLAISTIGQLLVILFDSFLVGLASHLYTTYRLGKTVIMLWHMTNHLTTWLATCLSIFYFFKIAHFPHSLFLWLRWRMNGMIVMLLILSLFLLIFDSLVLEIFIDISLNIIDKSNLTLYLDESKTLYDKLSILKTLLSLTSFIPFSLFLTSLLFLFLSLVRHTRNLKLSSLGSRDSSTEAHRRAMKMVMSFLFLFIVHFFSLQVANWIFFMLWNNKCIKFVMLALNAFPSCHSFILILGNSKLQQTAVRLLWHLRNYTKTPNPLPL.

The Extracellular segment spans residues 1–7 (MATELDK). Residues 8–28 (IFLILAIAEFIISMLGNVFIG) traverse the membrane as a helical segment. The Cytoplasmic segment spans residues 29–50 (LVNCSEGIKNQKVFSADFILTC). The helical transmembrane segment at 51–71 (LAISTIGQLLVILFDSFLVGL) threads the bilayer. The Extracellular portion of the chain corresponds to 72–101 (ASHLYTTYRLGKTVIMLWHMTNHLTTWLAT). The helical transmembrane segment at 102–122 (CLSIFYFFKIAHFPHSLFLWL) threads the bilayer. Residues 123–127 (RWRMN) are Cytoplasmic-facing. Residues 128-148 (GMIVMLLILSLFLLIFDSLVL) form a helical membrane-spanning segment. The Extracellular segment spans residues 149-187 (EIFIDISLNIIDKSNLTLYLDESKTLYDKLSILKTLLSL). N163 carries an N-linked (GlcNAc...) asparagine glycan. Residues 188–208 (TSFIPFSLFLTSLLFLFLSLV) form a helical membrane-spanning segment. The Cytoplasmic portion of the chain corresponds to 209 to 238 (RHTRNLKLSSLGSRDSSTEAHRRAMKMVMS). A helical membrane pass occupies residues 239–259 (FLFLFIVHFFSLQVANWIFFM). The Extracellular portion of the chain corresponds to 260–265 (LWNNKC). Residues 266 to 286 (IKFVMLALNAFPSCHSFILIL) form a helical membrane-spanning segment. The Cytoplasmic segment spans residues 287–314 (GNSKLQQTAVRLLWHLRNYTKTPNPLPL).

Belongs to the G-protein coupled receptor T2R family.

Its subcellular location is the membrane. Receptor that may play a role in the perception of bitterness and is gustducin-linked. May play a role in sensing the chemical composition of the gastrointestinal content. The activity of this receptor may stimulate alpha gustducin, mediate PLC-beta-2 activation and lead to the gating of TRPM5. The chain is Taste receptor type 2 member 42 (TAS2R42) from Homo sapiens (Human).